Consider the following 340-residue polypeptide: KRR1 small subunit processome component homolog (340 aa).

A KH domain is found at 124–192 (DIIKIGNLVH…VRDIVLETMN (69 aa)). Over residues 228-244 (KNKNISKRKQPKSKKPK) the composition is skewed to basic residues. Disordered regions lie at residues 228–259 (KNKNISKRKQPKSKKPKKEYTPFPPAQPESKI) and 271–324 (NQEQ…KVDV). Positions 269–302 (FLNQEQKQAKRNQERSAKQADAAKKQDERRNKDF) form a coiled coil. Basic and acidic residues-rich tracts occupy residues 275–301 (KQAKRNQERSAKQADAAKKQDERRNKD) and 309–324 (APSRKRQAEDSSKVDV).

This sequence belongs to the KRR1 family. In terms of assembly, monomer. Component of the ribosomal small subunit (SSU) processome.

It localises to the nucleus. The protein resides in the nucleolus. In terms of biological role, required for 40S ribosome biogenesis. Involved in nucleolar processing of pre-18S ribosomal RNA and ribosome assembly. Binds to RNA. Required for female germline development, cell viability during eye development and for survival of dividing cells and epithelial cells during early wing disk development. The sequence is that of KRR1 small subunit processome component homolog from Drosophila persimilis (Fruit fly).